A 393-amino-acid chain; its full sequence is O-phospho-L-seryl-tRNA:Cys-tRNA synthase 1 (393 aa).

Pyridoxal 5'-phosphate-binding positions include 85–86, Asn-190, and 213–215; these read AR and SGH. Position 216 is an N6-(pyridoxal phosphate)lysine (Lys-216).

The protein belongs to the SepCysS family. In terms of assembly, homodimer. Interacts with SepRS. Pyridoxal 5'-phosphate is required as a cofactor.

It catalyses the reaction O-phospho-L-seryl-tRNA(Cys) + hydrogen sulfide + H(+) = L-cysteinyl-tRNA(Cys) + phosphate. Functionally, converts O-phospho-L-seryl-tRNA(Cys) (Sep-tRNA(Cys)) to L-cysteinyl-tRNA(Cys) (Cys-tRNA(Cys)). This is O-phospho-L-seryl-tRNA:Cys-tRNA synthase 1 from Methanospirillum hungatei JF-1 (strain ATCC 27890 / DSM 864 / NBRC 100397 / JF-1).